The sequence spans 364 residues: Aminomethyltransferase (364 aa).

This sequence belongs to the GcvT family. As to quaternary structure, the glycine cleavage system is composed of four proteins: P, T, L and H.

It carries out the reaction N(6)-[(R)-S(8)-aminomethyldihydrolipoyl]-L-lysyl-[protein] + (6S)-5,6,7,8-tetrahydrofolate = N(6)-[(R)-dihydrolipoyl]-L-lysyl-[protein] + (6R)-5,10-methylene-5,6,7,8-tetrahydrofolate + NH4(+). Functionally, the glycine cleavage system catalyzes the degradation of glycine. This chain is Aminomethyltransferase, found in Salmonella dublin (strain CT_02021853).